The following is a 241-amino-acid chain: Xyloglucan-specific endo-beta-1,4-glucanase 1 (241 aa).

The first 19 residues, 1-19 (MKGLLAGTIAAATFAVASA), serve as a signal peptide directing secretion. Glu-136 is a catalytic residue. N-linked (GlcNAc...) asparagine glycosylation is found at Asn-174 and Asn-190. The active site involves Glu-222.

The protein belongs to the glycosyl hydrolase 12 (cellulase H) family. In terms of assembly, interacts with host apoplastic glucanase inhibitor GIP2.

The catalysed reaction is xyloglucan + H2O = xyloglucan oligosaccharides.. With respect to regulation, the xyloglucanase activity is inhibited by the binding of the host apoplastic glucanase inhibitor GIP2. Its function is as follows. Glycoside hydrolase that exhibits xyloglucanase activity. Acts as an important virulence factor during P.parasitica infection of its host Nicotiana benthamiana. Also acts as a pathogen-associated molecular pattern (PAMP) in host species, where it can trigger defense responses including cell death. The PAMP activity is independent of its xyloglucanase activity. With paralog XLP1, is required to elevate apoplastic sugar during P.parasitica infection. In Phytophthora nicotianae (strain INRA-310) (Phytophthora parasitica), this protein is Xyloglucan-specific endo-beta-1,4-glucanase 1.